Reading from the N-terminus, the 333-residue chain is NADH dehydrogenase (ubiquinone) complex I, assembly factor 6 (333 aa).

The transit peptide at 1–44 (MAASAHGSVWGPLRLGIPGLCCRRPPLGLYARMRRLPGPEVSGR) directs the protein to the mitochondrion.

This sequence belongs to the NDUFAF6 family. Widely expressed. A lower expression is observed in lung and kidney compared to heart, muscle and liver. In the kidney, expression is high in the basal zone of the proximal tubular cells.

The protein localises to the mitochondrion inner membrane. It is found in the cytoplasm. The protein resides in the nucleus. Involved in the assembly of mitochondrial NADH:ubiquinone oxidoreductase complex (complex I) at early stages. May play a role in the biogenesis of complex I subunit MT-ND1. The sequence is that of NADH dehydrogenase (ubiquinone) complex I, assembly factor 6 (NDUFAF6) from Homo sapiens (Human).